The following is a 188-amino-acid chain: Mediator of RNA polymerase II transcription subunit 11 (188 aa).

A coiled-coil region spans residues Lys46–Gln72. The disordered stretch occupies residues Asp116–Gln188. A compositionally biased stretch (acidic residues) spans Gln123–Ala141. A compositionally biased stretch (low complexity) spans Ser146–Asp155. Over residues Ser171–Thr180 the composition is skewed to basic and acidic residues.

Belongs to the Mediator complex subunit 11 family. As to quaternary structure, component of the Mediator complex.

Its subcellular location is the nucleus. In terms of biological role, component of the Mediator complex, a coactivator involved in the regulated transcription of nearly all RNA polymerase II-dependent genes. Mediator functions as a bridge to convey information from gene-specific regulatory proteins to the basal RNA polymerase II transcription machinery. Mediator is recruited to promoters by direct interactions with regulatory proteins and serves as a scaffold for the assembly of a functional pre-initiation complex with RNA polymerase II and the general transcription factors. This Caenorhabditis elegans protein is Mediator of RNA polymerase II transcription subunit 11 (mdt-11).